The sequence spans 189 residues: Protein Rex (189 aa).

Residues 1-16 (MPKTRRRPRRSQRKRP) show a composition bias toward basic residues. The interval 1-28 (MPKTRRRPRRSQRKRPPTPWPTSQGLDR) is disordered. Residues 2-18 (PKTRRRPRRSQRKRPPT) carry the Nuclear localization signal, and RNA-binding (RxRE) motif. Residues 56 to 70 (RPVYIVTPYWPPVQS) form a homomultimerization region. At S70 the chain carries Phosphoserine; by host. The Nuclear export signal signature appears at 82-93 (LSAQLYSSLSLD). Over residues 84–94 (AQLYSSLSLDS) the composition is skewed to low complexity. Residues 84-189 (AQLYSSLSLD…PPSPGPSCPT (106 aa)) are disordered. Pro residues predominate over residues 111-125 (RRPPIQPPTFHPPSS). The tract at residues 123 to 131 (PSSRPCANT) is homomultimerization. Positions 127–164 (PCANTPPSETDTWNPPLGSTSQPCLFQTPASGPKTCTP) are enriched in polar residues. A Phosphothreonine; by host modification is found at T174. A Phosphoserine; by host modification is found at S177. Positions 178–189 (FPPPSPGPSCPT) are enriched in pro residues.

Belongs to the deltaretrovirus Rex protein family. As to quaternary structure, homomultimer. Multimeric assembly is essential for activity and involves XPO1. Binds to human XPO1 and KPNB1. Interacts (via N-terminal nuclear localization signal) with human NPM1. Post-translationally, phosphorylated.

It localises to the host nucleus. Its subcellular location is the host nucleolus. It is found in the host cytoplasm. Its function is as follows. Rex escorts unspliced gag-pro-pol and singly spliced env mRNAs out of the nucleus of infected cells. These mRNAs carry a recognition sequence called Rex responsive element (RxRE or XRE) located at the 3' region of the long terminal repeat (LTR). This function is essential since most HTLV proteins are translated from unspliced or partially spliced pre-mRNAs that cannot exit the nucleus by the pathway used by fully processed cellular mRNAs. Rex itself is translated from a fully spliced mRNA that probably readily exits the nucleus. Rex's nuclear localization signal (NLS) binds directly to KPNB1/importin beta-1 without previous binding to KPNA1/importin alpha-1. KPNB1 binds to the GDP bound form of RAN (Ran-GDP) and targets Rex to the nucleus. In the nucleus, the conversion from Ran-GDP to Ran-GTP dissociates Rex from KPNB1 and allows Rex's binding to the RRE in viral pre-mRNAs. Rex multimerizes on the RRE via cooperative assembly. This multimerization is critical for its full biological activity, since it may shield the viral RNA from being spliced or down-regulated, and probably exposes Rex's nuclear export signal (NES) to the surface. Rex can then form a complex with XPO1/CRM1, RANBP3 and Ran-GTP, leading to nuclear export of the complex. Conversion from Ran-GTP to Ran-GDP mediates dissociation of the Rex/RRE/XPO1/RANBP3/RAN complex, so that Rex can return to the nucleus for a subsequent round of export. In Homo sapiens (Human), this protein is Protein Rex.